The sequence spans 473 residues: Vasculin (473 aa).

Disordered stretches follow at residues 1–25 (MAQH…SSLN), 46–149 (RHNS…REPN), and 191–342 (VGNL…QERD). Ser-49 is modified (phosphoserine). Arg-87 carries the omega-N-methylarginine modification. The segment covering 119-133 (ETGRKEDKRERKQFE) has biased composition (basic and acidic residues). Composition is skewed to polar residues over residues 194-204 (LPSQPVKNGTG) and 251-286 (AFKS…QQPR). 4 positions are modified to phosphoserine: Ser-274, Ser-276, Ser-322, and Ser-381. Residues 293 to 329 (MRTDKKSEFLKALKRDRVEEEHEDESRAGSEKDDDSF) show a composition bias toward basic and acidic residues. The segment at 444–473 (GPWKNSTFKPTTENDDTETSSSDTSDDDDV) is disordered. Residues 456–473 (ENDDTETSSSDTSDDDDV) show a composition bias toward acidic residues.

This sequence belongs to the vasculin family. As to quaternary structure, interacts with GTF2B, GTF2F2, RNA polymerase II and TBP. In terms of tissue distribution, widely expressed. Some isoforms may be specifically expressed in veins and arteries (at protein level). Isoform 4 is widely expressed. Isoform 1, isoform 2 and isoform 3 may be specifically expressed in vascular smooth muscle cells.

Its subcellular location is the nucleus. It localises to the cytoplasm. Functionally, functions as a GC-rich promoter-specific transactivating transcription factor. This chain is Vasculin (GPBP1), found in Homo sapiens (Human).